The sequence spans 274 residues: MGVRIYKPTSAGRRNMSVSTFEEITKKEPEPRLIEPLRKKAGRNNQGRITVRHRGGGHKRFYRIIDFKRNKFGVPAKVQAIEYDPNRTARIALLAYADGEKRYIIAPLGLKVGDTVMSGPDAEIRVGNALPLSAIPLGTQIHNIELEIGRGGVLVRSAGTAAQLMAKEGDYAIVRMPSGEMRMIHLRCMATIGQVGNVDHQNIRLGKAGRSRWLGRRPRVRGAAMNPRDHPHGGGEGRAPRGMSTPKTKWGKPARGVKTRHNPRFDRFIVRRRK.

Residues 220 to 265 (VRGAAMNPRDHPHGGGEGRAPRGMSTPKTKWGKPARGVKTRHNPRF) form a disordered region. Over residues 227–239 (PRDHPHGGGEGRA) the composition is skewed to basic and acidic residues. Residues 249-262 (KWGKPARGVKTRHN) are compositionally biased toward basic residues.

Belongs to the universal ribosomal protein uL2 family. Part of the 50S ribosomal subunit. Forms a bridge to the 30S subunit in the 70S ribosome.

One of the primary rRNA binding proteins. Required for association of the 30S and 50S subunits to form the 70S ribosome, for tRNA binding and peptide bond formation. It has been suggested to have peptidyltransferase activity; this is somewhat controversial. Makes several contacts with the 16S rRNA in the 70S ribosome. The chain is Large ribosomal subunit protein uL2 from Chloroflexus aurantiacus (strain ATCC 29364 / DSM 637 / Y-400-fl).